A 127-amino-acid chain; its full sequence is Fatty acid-binding protein, liver (127 aa).

M1 is subject to N-acetylmethionine. Position 11 is a phosphoserine (S11). N6-succinyllysine occurs at positions 31 and 36. Residue S39 is modified to Phosphoserine. K46 is subject to N6-succinyllysine. At T51 the chain carries Phosphothreonine. K57 and K78 each carry N6-succinyllysine. N6-acetyllysine; alternate is present on K84. Position 84 is an N6-succinyllysine; alternate (K84). N6-succinyllysine is present on K90. The residue at position 100 (S100) is a Phosphoserine. K121 is modified (N6-succinyllysine).

Belongs to the calycin superfamily. Fatty-acid binding protein (FABP) family.

The protein localises to the cytoplasm. Its function is as follows. Plays a role in lipoprotein-mediated cholesterol uptake in hepatocytes. Binds cholesterol. Binds free fatty acids and their coenzyme A derivatives, bilirubin, and some other small molecules in the cytoplasm. May be involved in intracellular lipid transport. The polypeptide is Fatty acid-binding protein, liver (Fabp1) (Mus musculus (Mouse)).